The following is a 456-amino-acid chain: Protein odr-4 homolog (456 aa).

Residues 374-401 (IESSKNNNNNNNNNNNNNNNNNNNNSKL) show a composition bias toward low complexity. The disordered stretch occupies residues 374–403 (IESSKNNNNNNNNNNNNNNNNNNNNSKLSN). A helical transmembrane segment spans residues 436–456 (YLIIIISVLVLMVAFYFKFFV).

It belongs to the ODR-4 family.

The protein localises to the membrane. May play a role in the trafficking of a subset of G-protein coupled receptors. The polypeptide is Protein odr-4 homolog (Dictyostelium discoideum (Social amoeba)).